Reading from the N-terminus, the 293-residue chain is NAD-dependent protein deacetylase (293 aa).

The Deacetylase sirtuin-type domain maps to 5 to 282 (PAHDHHTLQD…LHAPPHLPRA (278 aa)). Residues 27–47 (GAGCSTDSGIPDYRDLQGGWK) and 105–108 (QNVD) each bind NAD(+). The Proton acceptor role is filled by His123. Zn(2+) is bound by residues Cys131, Cys134, Cys182, and Cys185. Residues 222-224 (GSS), 248-250 (NFG), and Cys266 contribute to the NAD(+) site.

This sequence belongs to the sirtuin family. Class II subfamily. It depends on Zn(2+) as a cofactor.

Its subcellular location is the cytoplasm. The enzyme catalyses N(6)-acetyl-L-lysyl-[protein] + NAD(+) + H2O = 2''-O-acetyl-ADP-D-ribose + nicotinamide + L-lysyl-[protein]. Functionally, NAD-dependent protein deacetylase which modulates the activities of several enzymes which are inactive in their acetylated form. This is NAD-dependent protein deacetylase from Xanthomonas axonopodis pv. citri (strain 306).